The following is a 547-amino-acid chain: Glucose-6-phosphate isomerase (547 aa).

Glu-350 (proton donor) is an active-site residue. Active-site residues include His-381 and Lys-510.

The protein belongs to the GPI family.

It is found in the cytoplasm. The enzyme catalyses alpha-D-glucose 6-phosphate = beta-D-fructose 6-phosphate. It participates in carbohydrate biosynthesis; gluconeogenesis. Its pathway is carbohydrate degradation; glycolysis; D-glyceraldehyde 3-phosphate and glycerone phosphate from D-glucose: step 2/4. Its function is as follows. Catalyzes the reversible isomerization of glucose-6-phosphate to fructose-6-phosphate. The protein is Glucose-6-phosphate isomerase of Mesorhizobium japonicum (strain LMG 29417 / CECT 9101 / MAFF 303099) (Mesorhizobium loti (strain MAFF 303099)).